A 233-amino-acid polypeptide reads, in one-letter code: LexA repressor (233 aa).

Positions 26–46 (FEEMKEALDLKSKSGVHRLIS) form a DNA-binding region, H-T-H motif. Active-site for autocatalytic cleavage activity residues include serine 153 and lysine 191.

The protein belongs to the peptidase S24 family. Homodimer.

It carries out the reaction Hydrolysis of Ala-|-Gly bond in repressor LexA.. Its function is as follows. Represses a number of genes involved in the response to DNA damage (SOS response), including recA and lexA. In the presence of single-stranded DNA, RecA interacts with LexA causing an autocatalytic cleavage which disrupts the DNA-binding part of LexA, leading to derepression of the SOS regulon and eventually DNA repair. The chain is LexA repressor from Erythrobacter litoralis (strain HTCC2594).